Consider the following 520-residue polypeptide: Peptide chain release factor 3 (520 aa).

The 266-residue stretch at 8-273 (EIRKTFAIIS…AYVDHAPMPS (266 aa)) folds into the tr-type G domain. GTP is bound by residues 17 to 24 (SHPDAGKT), 85 to 89 (DTPGH), and 139 to 142 (NKLD).

It belongs to the TRAFAC class translation factor GTPase superfamily. Classic translation factor GTPase family. PrfC subfamily.

It is found in the cytoplasm. In terms of biological role, increases the formation of ribosomal termination complexes and stimulates activities of RF-1 and RF-2. It binds guanine nucleotides and has strong preference for UGA stop codons. It may interact directly with the ribosome. The stimulation of RF-1 and RF-2 is significantly reduced by GTP and GDP, but not by GMP. This is Peptide chain release factor 3 from Macrococcus caseolyticus (strain JCSC5402) (Macrococcoides caseolyticum).